A 330-amino-acid chain; its full sequence is Cyclin N-terminal domain-containing protein 1 (330 aa).

The Cyclin N-terminal domain occupies 27–178 (DALLHLAQQN…VLKSLNFRIN (152 aa)).

Interacts with PRR19; this interaction promotes crossover formation. Interacts with RFC3 and RFC4; these interactions facilitate crossover formation. Interacts with CDC34; this interaction regulates the cell-cycle progression.

The protein localises to the nucleus. It is found in the cytoplasm. The protein resides in the chromosome. Functionally, plays a role in the different steps of crossover formation during meiotic recombination. Participates in the crossover differentiation step of crossover-specific recombination intermediates through its interaction with PRR19. In addition, stimulates crossover formation through the interactions with RFC3 and RFC4 and simultaneously regulates cell-cycle progression through interactions with CDC34 and subsequent ubiquitination of WEE1. May also participates in an active deselection process that destabilizes or removes excess pre-CO intermediates. This chain is Cyclin N-terminal domain-containing protein 1, found in Homo sapiens (Human).